We begin with the raw amino-acid sequence, 205 residues long: Large ribosomal subunit protein uL3 (205 aa).

The segment at 126–150 is disordered; sequence GGPKTHGQSDRHRAPGSISSTTTPG.

It belongs to the universal ribosomal protein uL3 family. In terms of assembly, part of the 50S ribosomal subunit. Forms a cluster with proteins L14 and L19.

Its function is as follows. One of the primary rRNA binding proteins, it binds directly near the 3'-end of the 23S rRNA, where it nucleates assembly of the 50S subunit. The protein is Large ribosomal subunit protein uL3 of Dehalococcoides mccartyi (strain ATCC BAA-2266 / KCTC 15142 / 195) (Dehalococcoides ethenogenes (strain 195)).